The sequence spans 92 residues: Acylphosphatase (92 aa).

Residues 5–92 enclose the Acylphosphatase-like domain; the sequence is QVQLFVRGRV…GDFFDFRITD (88 aa). Catalysis depends on residues Arg-20 and Asn-38.

It belongs to the acylphosphatase family.

It carries out the reaction an acyl phosphate + H2O = a carboxylate + phosphate + H(+). This Sorangium cellulosum (strain So ce56) (Polyangium cellulosum (strain So ce56)) protein is Acylphosphatase (acyP).